The chain runs to 185 residues: Neuronal vesicle trafficking-associated protein 1 (185 aa).

Topologically, residues 1–82 (MVKLGNNFAE…ITEGVTERFK (82 aa)) are cytoplasmic. Residues 83–103 (VSVLVLFALAFLTCVVFLVVY) traverse the membrane as a helical; Signal-anchor for type II membrane protein segment. Over 104-185 (KVYKYDRACP…QETEAAEKSA (82 aa)) the chain is Lumenal. The interval 129–164 (ESYYAEQDSSAREKFYTVINHYNLAKQSITRSVSPW) is required for GRIP1 interaction.

The protein belongs to the NSG family. In terms of assembly, forms a complex with GRIP1, GRIA2 and STX12 through direct interaction with GRIP1; controls the intracellular fate of AMPAR and the endosomal sorting of the GRIA2 subunit toward recycling and membrane targeting. Interacts with STX12. Interacts with APP; could regulate APP processing. Interacts with FAM171A1.

The protein localises to the membrane. The protein resides in the golgi apparatus. It is found in the trans-Golgi network membrane. Its subcellular location is the endosome membrane. It localises to the cell projection. The protein localises to the dendrite. The protein resides in the early endosome membrane. It is found in the late endosome membrane. Its subcellular location is the lysosome lumen. It localises to the recycling endosome membrane. The protein localises to the cytoplasmic vesicle membrane. The protein resides in the golgi stack membrane. It is found in the endosome. Its subcellular location is the multivesicular body membrane. It localises to the endoplasmic reticulum membrane. Plays a role in the recycling mechanism in neurons of multiple receptors, including AMPAR, APP and L1CAM and acts at the level of early endosomes to promote sorting of receptors toward a recycling pathway. Regulates sorting and recycling of GRIA2 through interaction with GRIP1 and then contributes to the regulation of synaptic transmission and plasticity by affecting the recycling and targeting of AMPA receptors to the synapse. Is required for faithful sorting of L1CAM to axons by facilitating trafficking from somatodendritic early endosome or the recycling endosome. In an other hand, induces apoptosis via the activation of CASP3 in response to DNA damage. This chain is Neuronal vesicle trafficking-associated protein 1, found in Macaca fascicularis (Crab-eating macaque).